A 3303-amino-acid polypeptide reads, in one-letter code: Protein unc-80 homolog (3303 aa).

Residues M1–N37 show a composition bias toward low complexity. The segment at M1 to D43 is disordered. A helical membrane pass occupies residues L202 to L222. Disordered regions lie at residues L284–P316, L361–I422, L491–I512, A526–R546, F1036–N1067, L1443–A1563, and V1627–I1671. A compositionally biased stretch (low complexity) spans L361 to N377. 2 stretches are compositionally biased toward basic and acidic residues: residues S378–F391 and S401–I422. The span at P495–S505 shows a compositional bias: polar residues. A compositionally biased stretch (polar residues) spans S1058–N1067. Over residues F1490–R1499 the composition is skewed to basic residues. Polar residues predominate over residues D1546–S1556. Positions K1660–I1671 are enriched in basic and acidic residues. The next 3 helical transmembrane spans lie at V1969–L1989, L2018–V2038, and L2048–F2068. 3 disordered regions span residues N2518–E2550, E3003–Q3158, and F3170–N3262. Over residues E3003–D3018 the composition is skewed to basic and acidic residues. Polar residues-rich tracts occupy residues Q3033 to H3053 and P3071 to G3106. Positions S3124 to T3134 are enriched in gly residues. Over residues G3135–Q3152 the composition is skewed to low complexity. Over residues S3198 to R3217 the composition is skewed to basic residues. Residues I3226 to A3239 show a composition bias toward polar residues. Low complexity predominate over residues S3246–S3257.

The protein belongs to the unc-80 family. As to quaternary structure, interacts with unc79 and na. Can interact with unc79 independently of na.

Its subcellular location is the membrane. Its function is as follows. Component of the na (narrow abdomen) sodium channel complex. In the circadian clock neurons it functions with na and unc79 to promote circadian rhythmicity. This is Protein unc-80 homolog from Drosophila melanogaster (Fruit fly).